A 347-amino-acid polypeptide reads, in one-letter code: NADH-ubiquinone oxidoreductase chain 2 (347 aa).

Transmembrane regions (helical) follow at residues 3-23 (PPIL…VLMS), 25-45 (HWLM…PILM), 59-79 (YFLT…INLM), 96-116 (TMMT…FWVP), 122-142 (VHMS…LLVL), 149-169 (IDPN…GWGG), 178-198 (ILAY…LYNP), 200-220 (MMLL…MLFM), 242-262 (SLIL…GFIP), 274-294 (EMII…YFYM), and 323-343 (MILL…TPLL).

Belongs to the complex I subunit 2 family. As to quaternary structure, core subunit of respiratory chain NADH dehydrogenase (Complex I) which is composed of 45 different subunits. Interacts with TMEM242.

It localises to the mitochondrion inner membrane. It catalyses the reaction a ubiquinone + NADH + 5 H(+)(in) = a ubiquinol + NAD(+) + 4 H(+)(out). Functionally, core subunit of the mitochondrial membrane respiratory chain NADH dehydrogenase (Complex I) that is believed to belong to the minimal assembly required for catalysis. Complex I functions in the transfer of electrons from NADH to the respiratory chain. The immediate electron acceptor for the enzyme is believed to be ubiquinone. The chain is NADH-ubiquinone oxidoreductase chain 2 from Suricata suricatta (Meerkat).